The following is a 483-amino-acid chain: Aspartyl/glutamyl-tRNA(Asn/Gln) amidotransferase subunit B (483 aa).

It belongs to the GatB/GatE family. GatB subfamily. In terms of assembly, heterotrimer of A, B and C subunits.

It catalyses the reaction L-glutamyl-tRNA(Gln) + L-glutamine + ATP + H2O = L-glutaminyl-tRNA(Gln) + L-glutamate + ADP + phosphate + H(+). The catalysed reaction is L-aspartyl-tRNA(Asn) + L-glutamine + ATP + H2O = L-asparaginyl-tRNA(Asn) + L-glutamate + ADP + phosphate + 2 H(+). Allows the formation of correctly charged Asn-tRNA(Asn) or Gln-tRNA(Gln) through the transamidation of misacylated Asp-tRNA(Asn) or Glu-tRNA(Gln) in organisms which lack either or both of asparaginyl-tRNA or glutaminyl-tRNA synthetases. The reaction takes place in the presence of glutamine and ATP through an activated phospho-Asp-tRNA(Asn) or phospho-Glu-tRNA(Gln). The polypeptide is Aspartyl/glutamyl-tRNA(Asn/Gln) amidotransferase subunit B (Brachyspira hyodysenteriae (strain ATCC 49526 / WA1)).